Reading from the N-terminus, the 174-residue chain is Crossover junction endodeoxyribonuclease RuvC (174 aa).

Active-site residues include Asp-8, Glu-68, and Asp-140. Residues Asp-8, Glu-68, and Asp-140 each coordinate Mg(2+).

The protein belongs to the RuvC family. In terms of assembly, homodimer which binds Holliday junction (HJ) DNA. The HJ becomes 2-fold symmetrical on binding to RuvC with unstacked arms; it has a different conformation from HJ DNA in complex with RuvA. In the full resolvosome a probable DNA-RuvA(4)-RuvB(12)-RuvC(2) complex forms which resolves the HJ. Mg(2+) serves as cofactor.

The protein localises to the cytoplasm. It catalyses the reaction Endonucleolytic cleavage at a junction such as a reciprocal single-stranded crossover between two homologous DNA duplexes (Holliday junction).. Its function is as follows. The RuvA-RuvB-RuvC complex processes Holliday junction (HJ) DNA during genetic recombination and DNA repair. Endonuclease that resolves HJ intermediates. Cleaves cruciform DNA by making single-stranded nicks across the HJ at symmetrical positions within the homologous arms, yielding a 5'-phosphate and a 3'-hydroxyl group; requires a central core of homology in the junction. The consensus cleavage sequence is 5'-(A/T)TT(C/G)-3'. Cleavage occurs on the 3'-side of the TT dinucleotide at the point of strand exchange. HJ branch migration catalyzed by RuvA-RuvB allows RuvC to scan DNA until it finds its consensus sequence, where it cleaves and resolves the cruciform DNA. This chain is Crossover junction endodeoxyribonuclease RuvC, found in Legionella pneumophila (strain Corby).